A 530-amino-acid chain; its full sequence is Probable phosphoacetylglucosamine mutase (530 aa).

Residue S62 is the Phosphoserine intermediate of the active site. Mg(2+) contacts are provided by S62, D278, D280, and D282. Substrate-binding positions include E369 to N371, R481 to T485, and R490.

Belongs to the phosphohexose mutase family. Mg(2+) is required as a cofactor.

The enzyme catalyses N-acetyl-alpha-D-glucosamine 1-phosphate = N-acetyl-D-glucosamine 6-phosphate. It functions in the pathway nucleotide-sugar biosynthesis; UDP-N-acetyl-alpha-D-glucosamine biosynthesis; N-acetyl-alpha-D-glucosamine 1-phosphate from alpha-D-glucosamine 6-phosphate (route I): step 2/2. In terms of biological role, catalyzes the conversion of GlcNAc-6-P into GlcNAc-1-P during the synthesis of uridine diphosphate/UDP-GlcNAc, which is a biosynthetic precursor of chitin and also supplies the amino sugars for N-linked oligosaccharides of glycoproteins. The protein is Probable phosphoacetylglucosamine mutase of Encephalitozoon cuniculi (strain GB-M1) (Microsporidian parasite).